Consider the following 489-residue polypeptide: MEKWWFNSMLSNEELEHACGLSKSMESLGPIGNTSGGEDHIINNMDKNIHSWGDSGSSSCSNVYPLFGVRGIQGFISDDTFLVRDSNGDSYSIYFDIENKIFEIDNDHSFLSELESSFSSYQNNGSNSDNPYYDRYIYDTKYSWNNYINSCIDSYLRSEIRIDSYILSGSDNYSDSYIYSYICSECVNSSESSSIKTSTNGSDLNIRGRYNDLDLNKKYRHLWVQCENCYGLNYKKFFRSKMNICEQCGYHLKMSSSDRIELSIDTGTWDPMDEDMVSMDPIEFHSEEELYKDRINSYQRKTGLTEAVQTGIGQLNGIPIAIGVMDFQFMGGSMGSVVGEKITRLIEYATNRSLPVIIVCASGGARMQEGSLSLMQMAKISSASYNYQSNKKLFYVSILTSPTTGGVTASFGMLGDIIIAEPNAYIAFAGKRVIEQTLNKTVPDGSQTAEYLFHKGLFDPIVPRNLLKGVLSELFQLHGFFPLNSNSIK.

In terms of domain architecture, CoA carboxyltransferase N-terminal spans 222–489 (LWVQCENCYG…FFPLNSNSIK (268 aa)). Residues Cys226, Cys229, Cys245, and Cys248 each coordinate Zn(2+). The segment at 226-248 (CENCYGLNYKKFFRSKMNICEQC) adopts a C4-type zinc-finger fold.

This sequence belongs to the AccD/PCCB family. Acetyl-CoA carboxylase is a heterohexamer composed of biotin carboxyl carrier protein, biotin carboxylase and 2 subunits each of ACCase subunit alpha and ACCase plastid-coded subunit beta (accD). Requires Zn(2+) as cofactor.

The protein resides in the plastid. It is found in the chloroplast stroma. The catalysed reaction is N(6)-carboxybiotinyl-L-lysyl-[protein] + acetyl-CoA = N(6)-biotinyl-L-lysyl-[protein] + malonyl-CoA. It functions in the pathway lipid metabolism; malonyl-CoA biosynthesis; malonyl-CoA from acetyl-CoA: step 1/1. Component of the acetyl coenzyme A carboxylase (ACC) complex. Biotin carboxylase (BC) catalyzes the carboxylation of biotin on its carrier protein (BCCP) and then the CO(2) group is transferred by the transcarboxylase to acetyl-CoA to form malonyl-CoA. The polypeptide is Acetyl-coenzyme A carboxylase carboxyl transferase subunit beta, chloroplastic (Buxus microphylla (Littleleaf boxwood)).